The chain runs to 338 residues: Ketol-acid reductoisomerase (NADP(+)) (338 aa).

In terms of domain architecture, KARI N-terminal Rossmann spans 1–181 (MKIYYDKDCN…GGGRAGIIET (181 aa)). Residues 24–27 (YGSQ), Arg-47, Ser-50, Ser-52, and 82–85 (DETQ) each bind NADP(+). Residue His-107 is part of the active site. Residue Gly-133 coordinates NADP(+). In terms of domain architecture, KARI C-terminal knotted spans 182-327 (SFKEETETDL…ARLRSMMSWI (146 aa)). The Mg(2+) site is built by Asp-190, Glu-194, Glu-226, and Glu-230. Ser-251 provides a ligand contact to substrate.

The protein belongs to the ketol-acid reductoisomerase family. The cofactor is Mg(2+).

The catalysed reaction is (2R)-2,3-dihydroxy-3-methylbutanoate + NADP(+) = (2S)-2-acetolactate + NADPH + H(+). It catalyses the reaction (2R,3R)-2,3-dihydroxy-3-methylpentanoate + NADP(+) = (S)-2-ethyl-2-hydroxy-3-oxobutanoate + NADPH + H(+). It participates in amino-acid biosynthesis; L-isoleucine biosynthesis; L-isoleucine from 2-oxobutanoate: step 2/4. Its pathway is amino-acid biosynthesis; L-valine biosynthesis; L-valine from pyruvate: step 2/4. Involved in the biosynthesis of branched-chain amino acids (BCAA). Catalyzes an alkyl-migration followed by a ketol-acid reduction of (S)-2-acetolactate (S2AL) to yield (R)-2,3-dihydroxy-isovalerate. In the isomerase reaction, S2AL is rearranged via a Mg-dependent methyl migration to produce 3-hydroxy-3-methyl-2-ketobutyrate (HMKB). In the reductase reaction, this 2-ketoacid undergoes a metal-dependent reduction by NADPH to yield (R)-2,3-dihydroxy-isovalerate. The protein is Ketol-acid reductoisomerase (NADP(+)) of Geobacter metallireducens (strain ATCC 53774 / DSM 7210 / GS-15).